The primary structure comprises 528 residues: 4-chlorobenzoate--CoA ligase (528 aa).

ATP is bound by residues 161 to 169 (TSGTTGLPK), 300 to 305 (NIYGTT), and N409.

This sequence belongs to the ATP-dependent AMP-binding enzyme family. As to quaternary structure, homodimer. Mg(2+) serves as cofactor.

It catalyses the reaction 4-chlorobenzoate + ATP + CoA = 4-chlorobenzoyl-CoA + AMP + diphosphate. The protein operates within xenobiotic degradation; 4-chlorobenzoate degradation; 4-hydroxybenzoate from 4-chlorobenzoate: step 2/3. Unaffected by 5,5'-dithiobis-(2-nitrobenzoic acid), 4-chloromercuribenzoate and sodium azide. Inhibited by Cu(2+), Fe(2+) and Zn(2+). Unaffected by Na(+), K(+) and Li(+). Functionally, catalyzes the formation of chlorobenzoyl-CoA via a 2 step reaction. First 4-chlorobenzoyl is adenylated by ATP, followed by acyl transfer from the 4-chlorobenzoyl-AMP intermediate to CoA. Benzoate, 4-bromobenzoate, 4-iodobenzoate and 4-methylbenzoate also act as substrates. Inactive towards 4-aminobenzoate, 4-hydroxybenzoate, 2-aminobenzoate, 2,3-dihydroxybenzoate, 4-coumarate and the aliphatic carboxylic acids palmate, caproate, laurate and butyrate. Negligible activity is detected when ATP is replaced by UTP, CTP or GTP as cosubstrate. This chain is 4-chlorobenzoate--CoA ligase, found in Pseudomonas sp. (strain CBS-3).